Reading from the N-terminus, the 209-residue chain is Redox-sensing transcriptional repressor Rex (209 aa).

Positions 16 to 55 form a DNA-binding region, H-T-H motif; that stretch reads LYYRFIQNLSLSGKQRVSSAELSEAVKVDSATIRRDFSYF. 90–95 provides a ligand contact to NAD(+); the sequence is GVGNLG.

The protein belongs to the transcriptional regulatory Rex family. In terms of assembly, homodimer.

It is found in the cytoplasm. In terms of biological role, modulates transcription in response to changes in cellular NADH/NAD(+) redox state. In Bacillus anthracis (strain A0248), this protein is Redox-sensing transcriptional repressor Rex.